The chain runs to 467 residues: Acetyl-CoA decarbonylase/synthase complex subunit beta (467 aa).

4 residues coordinate [Ni-Fe-S] cluster: C193, C196, C282, and C284. Positions 403–428 are disordered; it reads RWAEEEEEEEEKAPEEEAPAEEPTME. Acidic residues predominate over residues 405–426; sequence AEEEEEEEEKAPEEEAPAEEPT.

This sequence belongs to the CdhC family. In terms of assembly, monomer. The ACDS complex is made up of alpha, epsilon, beta, gamma and delta chains with a probable stoichiometry of (alpha(2)epsilon(2))(4)-beta(8)-(gamma(1)delta(1))(8). Requires [Ni-Fe-S] cluster as cofactor.

It catalyses the reaction Co(I)-[corrinoid Fe-S protein] + acetyl-CoA + H(+) = methyl-Co(III)-[corrinoid Fe-S protein] + CO + CoA. Its function is as follows. Part of a complex that catalyzes the reversible cleavage of acetyl-CoA, allowing autotrophic growth from CO(2). The alpha-epsilon complex generates CO from CO(2), while the beta subunit (this protein) combines the CO with CoA and a methyl group to form acetyl-CoA. The methyl group, which is incorporated into acetyl-CoA, is transferred to the beta subunit by a corrinoid iron-sulfur protein (the gamma-delta complex). The chain is Acetyl-CoA decarbonylase/synthase complex subunit beta from Methanopyrus kandleri (strain AV19 / DSM 6324 / JCM 9639 / NBRC 100938).